Consider the following 512-residue polypeptide: MADTVRKPQKVVIVGAGPVGSLAALYAAARGDEVEVYELRGDLRDPSTIPLNFTKSINLALSERGINAMKHSNREELTKNVLRDTIPMYGRMIHGKDRGQLWEAAQAYDVHGRAINAVDRSTLNNALLDELEHTPNVKLFFNHKLTGADFRANKAWFERRVPGEAPLPNSANRVPEIEVDFDFMLGADGAHSAVRYHMMKFARVDYQQEYIDTLWCEFRIAPTENGEFRISPNHLHIWPGREFMFIALPSADKSFTCTLFAPAVHYTYLASSPQKLLDFFDVHFPGVSPELIPPADLQEQFATNPHLPLISLKCKPHHFGSSVAIVGDAAHAVLPFYGQGLNAGLEDIRVLFEVLDKHSVYDLDASHEARREAREKAFQAYTDQRCADTHAINDLSKENYVEMRWGVKTPLYKLRKSIEEILDRYVPSLGWQTQYSRVSFSNQRYSDVIKLARRQGTVLGLGLGSTFITAVGVAGYMMWKNPKQYSPLCFMRYCLRHVSHIWVKFFRNTAYA.

This sequence belongs to the aromatic-ring hydroxylase family. KMO subfamily. The cofactor is FAD.

It is found in the mitochondrion outer membrane. It carries out the reaction L-kynurenine + NADPH + O2 + H(+) = 3-hydroxy-L-kynurenine + NADP(+) + H2O. It participates in cofactor biosynthesis; NAD(+) biosynthesis; quinolinate from L-kynurenine: step 1/3. Catalyzes the hydroxylation of L-kynurenine (L-Kyn) to form 3-hydroxy-L-kynurenine (L-3OHKyn). Required for synthesis of quinolinic acid. The sequence is that of Kynurenine 3-monooxygenase (bna4) from Aspergillus clavatus (strain ATCC 1007 / CBS 513.65 / DSM 816 / NCTC 3887 / NRRL 1 / QM 1276 / 107).